Reading from the N-terminus, the 148-residue chain is Deoxyuridine 5'-triphosphate nucleotidohydrolase (148 aa).

Residues 67 to 69 (RSG), asparagine 80, 84 to 86 (LID), and methionine 94 each bind substrate.

It belongs to the dUTPase family. Requires Mg(2+) as cofactor.

The enzyme catalyses dUTP + H2O = dUMP + diphosphate + H(+). It functions in the pathway pyrimidine metabolism; dUMP biosynthesis; dUMP from dCTP (dUTP route): step 2/2. Its function is as follows. This enzyme is involved in nucleotide metabolism: it produces dUMP, the immediate precursor of thymidine nucleotides and it decreases the intracellular concentration of dUTP so that uracil cannot be incorporated into DNA. The chain is Deoxyuridine 5'-triphosphate nucleotidohydrolase from Ralstonia nicotianae (strain ATCC BAA-1114 / GMI1000) (Ralstonia solanacearum).